A 579-amino-acid chain; its full sequence is MGRPGRKPRGRARPGLFPFPKEELRQGGSSPANLNAMSKGPVSFKDVTVDFTQEEWQRLDPAQKALYRDVMLENYCHFISVGFHITKPDMIRKLEQGEELWTERIFPSQSYLEEEEVLVKFSDYQDKPPKSIVIIKHKKLIKERSSVYGEALGKNRVVSKTLFEYKSDGKVLKNISEFISRDINPAMGKLGGSKEWEGSILTSKQEKTHPASILHKQIGRALSSEWDLAQHQKTQIPEQRFEYNKCDSSFLMTGVEFPHGRAHRGGGNFNYSKDDITLFEKSDLGIHPHDLMEKKCSSYNKYGELLCRKSVFVMHPSSQMDERPFQCPYCGNSFRRKSYLIEHERIHTGEKPYICCQCGRAFRQKTALTLHEKTHTEGKPYLCVDCGKSFRQKATLTRHHKAHTGEKAYECTQCGSAFGKKSYLIDHQRTHTGEKPYQCTECGKAFIQKTTLTVHQRTHTGEKPYICSECGKSFCQKTTLTLHQRIHTGEKPYICSDCGKSFRQKAILTVHYRIHTGEKSNGCPQCGKAFSRKSNLIRHQKIHTGEKPYECQECGKFFSCKSNLITHQKTHKTETMRFQ.

The segment covering 1-12 (MGRPGRKPRGRA) has biased composition (basic residues). Residues 1–37 (MGRPGRKPRGRARPGLFPFPKEELRQGGSSPANLNAM) are disordered. The mediates interaction with TRIM28 stretch occupies residues 12–135 (ARPGLFPFPK…DKPPKSIVII (124 aa)). A compositionally biased stretch (polar residues) spans 27-36 (GGSSPANLNA). Represses transcription regions lie at residues 40–81 (GPVS…FISV) and 105–240 (IFPS…PEQR). The KRAB domain occupies 42–113 (VSFKDVTVDF…RIFPSQSYLE (72 aa)). A C2H2-type 1; degenerate zinc finger spans residues 241 to 263 (FEYNKCDSSFLMTGVEFPHGRAH). 9 C2H2-type zinc fingers span residues 325-347 (FQCP…ERIH), 353-375 (YICC…EKTH), 381-403 (YLCV…HKAH), 409-431 (YECT…QRTH), 437-459 (YQCT…QRTH), 465-487 (YICS…QRIH), 493-515 (YICS…YRIH), 521-543 (NGCP…QKIH), and 549-571 (YECQ…QKTH). Residues 325–579 (FQCPYCGNSF…THKTETMRFQ (255 aa)) are required for transcriptional repression activity; probably mediates sequence-specific DNA-binding.

This sequence belongs to the krueppel C2H2-type zinc-finger protein family. In terms of assembly, interacts with TRIM28; enhances the transcriptional repressor activity.

The protein localises to the nucleus. Functions as a sequence-specific transcriptional repressor. The polypeptide is Zinc finger protein 382 (Znf382) (Mus musculus (Mouse)).